We begin with the raw amino-acid sequence, 339 residues long: Sperm acrosome membrane-associated protein 6 (339 aa).

The signal sequence occupies residues Met-1–Ala-41. The CXXC motif signature appears at Cys-42–Cys-45. Intrachain disulfides connect Cys-42–Cys-155, Cys-45–Cys-158, Cys-56–Cys-70, Cys-140–Cys-163, Cys-144–Cys-169, and Cys-186–Cys-241. The Extracellular portion of the chain corresponds to Cys-42 to Leu-310. The CXXC motif signature appears at Cys-155–Cys-158. One can recognise an Ig-like domain in the interval Pro-166 to Ala-251. Asn-258 carries an N-linked (GlcNAc...) asparagine glycan. The helical transmembrane segment at Phe-311–Phe-331 threads the bilayer. At Phe-332–Asn-339 the chain is on the cytoplasmic side.

Belongs to the SPACA6 family. Forms a complex with IZUMO1 and TMEM81 on spermatocyte cell membrane required for fertilization. Highly expressed in testis. Minor expression also detected in epididymis, seminal vesicle and ovary. Predominantly expressed in testicular germ cells during spermiogenesis. Most abundant in round spermatids and detected at lower levels in elongating spermatids.

It localises to the cytoplasmic vesicle. The protein localises to the secretory vesicle. The protein resides in the acrosome membrane. Sperm protein required for fusion of sperm with the egg membrane during fertilization. May regulate the expression of sperm surface protein DCST2. The polypeptide is Sperm acrosome membrane-associated protein 6 (Mus musculus (Mouse)).